The following is a 307-amino-acid chain: Upstream stimulatory factor 1 (307 aa).

Disordered stretches follow at residues 104 to 131 (DDNG…SVGG) and 168 to 207 (QGGS…VERR). Positions 122-131 (PTDSSTSVGG) are enriched in low complexity. The segment covering 187–207 (DGPRTTRDDKRRAQHNEVERR) has biased composition (basic and acidic residues). The bHLH domain occupies 196 to 251 (KRRAQHNEVERRRRDKINNWIVQLSKIIPDCSMESTKTGQSKGGILSKACDYIQEL). The interval 268 to 289 (LQMDNEVLRQQVEDLKNNNLTL) is leucine-zipper.

As to quaternary structure, efficient DNA binding requires dimerization with another bHLH protein. Binds DNA as a homodimer or a heterodimer. In terms of tissue distribution, oocyte and somatic tissue. Oocytic and somatic forms of this protein exist, probably as a result of post-translational modifications or minor splicing differences.

It localises to the nucleus. Its function is as follows. May act as a regulator of transcription factor IIIA (TFIIIA) gene expression. This is Upstream stimulatory factor 1 (usf1) from Xenopus borealis (Kenyan clawed frog).